Reading from the N-terminus, the 216-residue chain is Small ribosomal subunit protein uS2 (216 aa).

The protein belongs to the universal ribosomal protein uS2 family.

This is Small ribosomal subunit protein uS2 from Carsonella ruddii (strain PV).